The following is a 246-amino-acid chain: uncharacterized protein (246 aa).

Helical transmembrane passes span 7–27, 50–70, 99–119, 135–155, 163–183, and 219–239; these read KVTL…ALII, LNIL…SMEF, VSFY…LLFF, LALI…GLLC, AVAV…VQLM, and FSIG…WWCF.

It is found in the cell membrane. This is an uncharacterized protein from Bacillus subtilis (strain 168).